The following is a 173-amino-acid chain: Probable WRKY transcription factor 50 (173 aa).

A DNA-binding region (WRKY) is located at residues 107–172 (SEVEVLDDGF…YEGSHNHSSM (66 aa)).

This sequence belongs to the WRKY group II-c family.

The protein localises to the nucleus. Its function is as follows. Transcription factor. Interacts specifically with the W box (5'-(T)TGAC[CT]-3'), a frequently occurring elicitor-responsive cis-acting element. This chain is Probable WRKY transcription factor 50 (WRKY50), found in Arabidopsis thaliana (Mouse-ear cress).